Reading from the N-terminus, the 602-residue chain is Elongation factor 4 (602 aa).

Residues 7 to 189 (ARLRNFCIIA…SVVDRIPPPK (183 aa)) enclose the tr-type G domain. GTP-binding positions include 19–24 (DHGKST) and 136–139 (NKVD).

It belongs to the TRAFAC class translation factor GTPase superfamily. Classic translation factor GTPase family. LepA subfamily.

The protein resides in the cell inner membrane. It catalyses the reaction GTP + H2O = GDP + phosphate + H(+). Required for accurate and efficient protein synthesis under certain stress conditions. May act as a fidelity factor of the translation reaction, by catalyzing a one-codon backward translocation of tRNAs on improperly translocated ribosomes. Back-translocation proceeds from a post-translocation (POST) complex to a pre-translocation (PRE) complex, thus giving elongation factor G a second chance to translocate the tRNAs correctly. Binds to ribosomes in a GTP-dependent manner. The sequence is that of Elongation factor 4 from Prochlorococcus marinus (strain SARG / CCMP1375 / SS120).